The primary structure comprises 459 residues: O-phospho-L-seryl-tRNA:Cys-tRNA synthase 1 (459 aa).

Residues 152–153 (AR), Asn257, and 280–282 (SGH) each bind pyridoxal 5'-phosphate. Lys283 carries the N6-(pyridoxal phosphate)lysine modification.

It belongs to the SepCysS family. As to quaternary structure, homodimer. Interacts with SepRS. Pyridoxal 5'-phosphate is required as a cofactor.

It catalyses the reaction O-phospho-L-seryl-tRNA(Cys) + hydrogen sulfide + H(+) = L-cysteinyl-tRNA(Cys) + phosphate. Functionally, converts O-phospho-L-seryl-tRNA(Cys) (Sep-tRNA(Cys)) to L-cysteinyl-tRNA(Cys) (Cys-tRNA(Cys)). In Methanococcoides burtonii (strain DSM 6242 / NBRC 107633 / OCM 468 / ACE-M), this protein is O-phospho-L-seryl-tRNA:Cys-tRNA synthase 1.